The following is a 100-amino-acid chain: METLVSSIFWTLAPWNNMLLLKHGRIEILEQNTMYGWYELPKQEFLNSEQPVHIFTTKKRSTGFRIGPESEGRLECQQASIIEFTRPDSTHFGNVQCQSH.

This sequence belongs to the ycf15 family.

The protein localises to the plastid. Its subcellular location is the chloroplast. This is an uncharacterized protein from Panax ginseng (Korean ginseng).